The sequence spans 405 residues: Type III polyketide synthase 10 (405 aa).

The segment covering 1-18 has biased composition (polar residues); it reads MVSTNAGGIASKQASSMA. The segment at 1 to 20 is disordered; it reads MVSTNAGGIASKQASSMAPN. Cys-170 functions as the Nucleophile in the catalytic mechanism.

The protein belongs to the thiolase-like superfamily. Chalcone/stilbene synthases family. In terms of assembly, interacts with STS1. In terms of tissue distribution, expressed in adult flowers.

It is found in the endoplasmic reticulum. Functionally, plant type III polyketide synthases (PKSs) that catalyzes the condensation of fatty acyl-CoA with malonyl-CoA to generate triketide and tetraketide alpha-pyrones, the main components of pollen exine and potential sporopollenin precursors. May be involved in the synthesis of sporopollenin precursors in tapetal cells to regulate pollen wall formation. Required for exine and Ubisch body formation in anthers. Does not possess chalcone synthase (CHS) activity in vitro with the substrates 4-coumaroyl-CoA and malonyl-CoA. This is Type III polyketide synthase 10 from Oryza sativa subsp. japonica (Rice).